The chain runs to 158 residues: Ribosome maturation factor RimP (158 aa).

The protein belongs to the RimP family.

The protein localises to the cytoplasm. Its function is as follows. Required for maturation of 30S ribosomal subunits. The polypeptide is Ribosome maturation factor RimP (Lactobacillus delbrueckii subsp. bulgaricus (strain ATCC 11842 / DSM 20081 / BCRC 10696 / JCM 1002 / NBRC 13953 / NCIMB 11778 / NCTC 12712 / WDCM 00102 / Lb 14)).